The primary structure comprises 287 residues: Ribosomal RNA small subunit methyltransferase A (287 aa).

A compositionally biased stretch (polar residues) spans 1–15; sequence MSKTTFDAQSITNSL. Positions 1 to 20 are disordered; it reads MSKTTFDAQSITNSLRAAKH. Positions 29, 31, 56, 77, and 126 each coordinate S-adenosyl-L-methionine.

It belongs to the class I-like SAM-binding methyltransferase superfamily. rRNA adenine N(6)-methyltransferase family. RsmA subfamily.

It is found in the cytoplasm. It carries out the reaction adenosine(1518)/adenosine(1519) in 16S rRNA + 4 S-adenosyl-L-methionine = N(6)-dimethyladenosine(1518)/N(6)-dimethyladenosine(1519) in 16S rRNA + 4 S-adenosyl-L-homocysteine + 4 H(+). In terms of biological role, specifically dimethylates two adjacent adenosines (A1518 and A1519) in the loop of a conserved hairpin near the 3'-end of 16S rRNA in the 30S particle. May play a critical role in biogenesis of 30S subunits. In Psychrobacter cryohalolentis (strain ATCC BAA-1226 / DSM 17306 / VKM B-2378 / K5), this protein is Ribosomal RNA small subunit methyltransferase A.